The sequence spans 75 residues: Mu-conotoxin GIIIA (75 aa).

Positions 1 to 20 are cleaved as a signal peptide; that stretch reads MMSKLGVLLTICLLLFPLTA. Positions 21–51 are excised as a propeptide; the sequence is LPMDGDEPANRPVERMQDNISSEQYPLFEKR. Disulfide bonds link Cys-54-Cys-66, Cys-55-Cys-71, and Cys-61-Cys-72. 4-hydroxyproline; partial is present on residues Pro-57 and Pro-58. Pro-68 is subject to 4-hydroxyproline. Alanine amide is present on Ala-73.

It belongs to the conotoxin M superfamily. Hydroxylated; hydroxylations improve the ability to block Nav1.4/SCN4A sodium channels but does not affect folding. Expressed by the venom duct.

It localises to the secreted. Functionally, mu-conotoxins block voltage-gated sodium channels (Nav). This toxin potently blocks rat Nav1.4/SCN4A (IC(50)= 19-110 nM). It also moderately blocks rNav1.1/SCN1A (Kd=260 nM), rNav1.2/SCN2A (IC(50)=2.7-17.8 uM), and mNav1.6/SCN8A (IC(50)=680 nM). The inhibition is reversible. In vivo, induces paralysis to an isolated skeletal muscle preparation from frog (cutaneous pectoralis) within a few minutes. The sequence is that of Mu-conotoxin GIIIA from Conus geographus (Geography cone).